Here is a 216-residue protein sequence, read N- to C-terminus: Ephrin-A1 (216 aa).

Positions 1 to 28 (MMELYRAAVQLIVGVGLGVGLWLREAQG) are cleaved as a signal peptide. Residues 29-161 (ERHIVFWNSS…RLRVHVSGRT (133 aa)) form the Ephrin RBD domain. The N-linked (GlcNAc...) asparagine glycan is linked to N36. C61 and C102 are disulfide-bonded. The tract at residues 162-181 (TPPPVNVHTPRSHIQSDEPE) is disordered. S195 carries GPI-anchor amidated serine lipidation. A propeptide spans 196-216 (AAPGTPCTLYGLLLAALLLRL) (removed in mature form).

It belongs to the ephrin family. Binds to the receptor tyrosine kinases EPHA2, EPHA4, EPHA5, EPHA6 and EPHA7. Also binds with low affinity to EPHA1.

It localises to the membrane. Functionally, cell surface GPI-bound ligand for Eph receptors, a family of receptor tyrosine kinases which are crucial for migration, repulsion and adhesion during neuronal, vascular and epithelial development. Binds promiscuously Eph receptors residing on adjacent cells, leading to contact-dependent bidirectional signaling into neighboring cells. This Xenopus laevis (African clawed frog) protein is Ephrin-A1 (efna1).